Consider the following 338-residue polypeptide: tRNA (cytidine(56)-2'-O)-methyltransferase (338 aa).

S-adenosyl-L-methionine-binding positions include Leu-79 and 105-109; that span reads GSEKV. In terms of domain architecture, HD spans 188–295; that stretch reads LINHVKSVKE…VAHADNLFAG (108 aa).

This sequence belongs to the aTrm56 family. Homodimer.

The protein resides in the cytoplasm. It carries out the reaction cytidine(56) in tRNA + S-adenosyl-L-methionine = 2'-O-methylcytidine(56) in tRNA + S-adenosyl-L-homocysteine + H(+). In terms of biological role, specifically catalyzes the AdoMet-dependent 2'-O-ribose methylation of cytidine at position 56 in tRNAs. This is tRNA (cytidine(56)-2'-O)-methyltransferase from Thermoplasma volcanium (strain ATCC 51530 / DSM 4299 / JCM 9571 / NBRC 15438 / GSS1).